The primary structure comprises 575 residues: Acetylcholine receptor subunit beta-type acr-2 (575 aa).

Positions 1 to 20 are cleaved as a signal peptide; sequence MKKTVKILLILITVFLKVHC. The Extracellular segment spans residues 21-270; the sequence is NGGHDDEAAD…IRRKTLFYTV (250 aa). Residues 31–57 are disordered; that stretch reads FLSHTNIDDPNNSSDPNKNSDQGDTMG. Low complexity predominate over residues 38-50; the sequence is DDPNNSSDPNKNS. Residues Asn41, Asn42, Asn80, and Asn131 are each glycosylated (N-linked (GlcNAc...) asparagine). Cys185 and Cys199 are disulfide-bonded. Helical transmembrane passes span 271-291, 299-319, and 331-351; these read ILII…YLPV, LTIS…KILP, and LLLA…IVNI. Topologically, residues 352–527 are cytoplasmic; it reads YFRSALSHKM…WKYVAMVLDR (176 aa). Residues 528 to 548 traverse the membrane as a helical segment; sequence LILLIFFGVTLGGTLGIICSA.

The protein belongs to the ligand-gated ion channel (TC 1.A.9) family. Acetylcholine receptor (TC 1.A.9.1) subfamily. In terms of assembly, component of nicotinic acetylcholine receptor. In cholinergic motoneurons, composed of 2 non-alpha subunits acr-2 and acr-3, and 3 alpha subunits unc-38, unc-63 and acr-12. Specifically expressed in cholinergic ventral cord motoneurons of the VA, VB, DA and DB classes but not AS and VC classes. Expressed in PVQ and DVC neurons in the tail.

It is found in the postsynaptic cell membrane. The protein localises to the cell membrane. Non-alpha subunit of nicotinic acetylcholine receptor (nAChR). Acts in cholinergic motoneurons to regulate presynaptic neurotransmitter release, thereby ensuring normal level of excitation of cholinergic motoneurons during locomotion. This is Acetylcholine receptor subunit beta-type acr-2 (acr-2) from Caenorhabditis elegans.